The sequence spans 385 residues: SWI/SNF-related matrix-associated actin-dependent regulator of chromatin subfamily B member 1 (385 aa).

The segment at 1-113 (MMMMALSKTF…DEKYKAVSIS (113 aa)) is DNA-binding. Glycyl lysine isopeptide (Lys-Gly) (interchain with G-Cter in SUMO2) cross-links involve residues lysine 106, lysine 108, and lysine 124. Phosphoserine is present on serine 129. A Glycyl lysine isopeptide (Lys-Gly) (interchain with G-Cter in SUMO2) cross-link involves residue lysine 161. The interval 183–243 (PEVLVPIRLD…VPAIASAIRQ (61 aa)) is HIV-1 integrase-binding. A run of 2 repeats spans residues 186–245 (LVPI…RQQI) and 259–319 (DQRV…RGQL). Positions 186-245 (LVPIRLDMEIDGQKLRDAFTWNMNEKLMTPEMFSEILCDDLDLNPLTFVPAIASAIRQQI) are MYC-binding. The segment at 186-319 (LVPIRLDMEI…TIAYSIRGQL (134 aa)) is 2 X approximate tandem repeats. The interaction with PPP1R15A stretch occupies residues 304-318 (GGEFVTTIAYSIRGQ).

This sequence belongs to the SNF5 family. In terms of assembly, component of the multiprotein chromatin-remodeling complexes SWI/SNF: SWI/SNF-A (BAF), SWI/SNF-B (PBAF) and related complexes. The canonical complex contains a catalytic subunit (either SMARCA4/BRG1/BAF190A or SMARCA2/BRM/BAF190B) and at least SMARCE1, ACTL6A/BAF53, SMARCC1/BAF155, SMARCC2/BAF170, and SMARCB1/SNF5/BAF47. Other subunits specific to each of the complexes may also be present permitting several possible combinations developmentally and tissue specific. Component of the BAF complex, which includes at least actin (ACTB), ARID1A/BAF250A, ARID1B/BAF250B, SMARCA2/BRM, SMARCA4/BRG1/BAF190A, ACTL6A/BAF53, ACTL6B/BAF53B, SMARCE1/BAF57 SMARCC1/BAF155, SMARCC2/BAF170, SMARCB1/SNF5/INI1, and one or more SMARCD1/BAF60A, SMARCD2/BAF60B, or SMARCD3/BAF60C. In muscle cells, the BAF complex also contains DPF3. Component of neural progenitors-specific chromatin remodeling complex (npBAF complex) composed of at least, ARID1A/BAF250A or ARID1B/BAF250B, SMARCD1/BAF60A, SMARCD3/BAF60C, SMARCA2/BRM/BAF190B, SMARCA4/BRG1/BAF190A, SMARCB1/BAF47, SMARCC1/BAF155, SMARCE1/BAF57, SMARCC2/BAF170, PHF10/BAF45A, ACTL6A/BAF53A and actin. Component of neuron-specific chromatin remodeling complex (nBAF complex) composed of at least, ARID1A/BAF250A or ARID1B/BAF250B, SMARCD1/BAF60A, SMARCD3/BAF60C, SMARCA2/BRM/BAF190B, SMARCA4/BRG1/BAF190A, SMARCB1/BAF47, SMARCC1/BAF155, SMARCE1/BAF57, SMARCC2/BAF170, DPF1/BAF45B, DPF3/BAF45C, ACTL6B/BAF53B and actin. Component of the SWI/SNF-B (PBAF) chromatin remodeling complex, at least composed of SMARCA4/BRG1, SMARCB1/BAF47/SNF5, ACTL6A/BAF53A or ACTL6B/BAF53B, SMARCE1/BAF57, SMARCD1/BAF60A, SMARCD2/BAF60B, perhaps SMARCD3/BAF60C, SMARCC1/BAF155, SMARCC2/BAF170, PBRM1/BAF180, ARID2/BAF200 and actin. Binds to double-stranded DNA. Interacts with CEBPB (when not methylated). Interacts with PIH1D1. Interacts with MYK and MAEL. Interacts with PPP1R15A. Interacts with DPF2. Interacts with YWHAZ. Interacts with ERCC6. Interacts with FOS, FOSB isoform 1 and 2, FOSL1 and FOSL2. As to quaternary structure, (Microbial infection) Binds tightly to the human immunodeficiency virus-type 1 (HIV-1) integrase in vitro and stimulates its DNA-joining activity. Interacts with human papillomavirus 18 E1 protein to stimulate its viral replication. Interacts with Epstein-Barr virus protein EBNA-2.

Its subcellular location is the nucleus. Its function is as follows. Core component of the BAF (hSWI/SNF) complex. This ATP-dependent chromatin-remodeling complex plays important roles in cell proliferation and differentiation, in cellular antiviral activities and inhibition of tumor formation. The BAF complex is able to create a stable, altered form of chromatin that constrains fewer negative supercoils than normal. This change in supercoiling would be due to the conversion of up to one-half of the nucleosomes on polynucleosomal arrays into asymmetric structures, termed altosomes, each composed of 2 histones octamers. Stimulates in vitro the remodeling activity of SMARCA4/BRG1/BAF190A. Involved in activation of CSF1 promoter. Belongs to the neural progenitors-specific chromatin remodeling complex (npBAF complex) and the neuron-specific chromatin remodeling complex (nBAF complex). During neural development a switch from a stem/progenitor to a postmitotic chromatin remodeling mechanism occurs as neurons exit the cell cycle and become committed to their adult state. The transition from proliferating neural stem/progenitor cells to postmitotic neurons requires a switch in subunit composition of the npBAF and nBAF complexes. As neural progenitors exit mitosis and differentiate into neurons, npBAF complexes which contain ACTL6A/BAF53A and PHF10/BAF45A, are exchanged for homologous alternative ACTL6B/BAF53B and DPF1/BAF45B or DPF3/BAF45C subunits in neuron-specific complexes (nBAF). The npBAF complex is essential for the self-renewal/proliferative capacity of the multipotent neural stem cells. The nBAF complex along with CREST plays a role regulating the activity of genes essential for dendrite growth. Plays a key role in cell-cycle control and causes cell cycle arrest in G0/G1. The polypeptide is SWI/SNF-related matrix-associated actin-dependent regulator of chromatin subfamily B member 1 (SMARCB1) (Homo sapiens (Human)).